Reading from the N-terminus, the 572-residue chain is Moesin/ezrin/radixin homolog 1 (572 aa).

One can recognise an FERM domain in the interval 1 to 291; sequence MNVRVTTMDA…GNHELYMRRR (291 aa). The segment at 456-491 is disordered; it reads TTTPSHHHVEEEEEMDNEEELVNGENGNQDFSKDFD. Residues 466-477 are compositionally biased toward acidic residues; the sequence is EEEEMDNEEELV. A Phosphothreonine modification is found at Thr-553.

In terms of assembly, interacts with cytoskeletal actin.

It localises to the cell junction. The protein resides in the adherens junction. The protein localises to the cell projection. Its subcellular location is the microvillus. It is found in the rhabdomere. It localises to the cell membrane. The protein resides in the cytoplasm. The protein localises to the cytoskeleton. In terms of biological role, involved in connections of major cytoskeletal structures to the plasma membrane. This Culex quinquefasciatus (Southern house mosquito) protein is Moesin/ezrin/radixin homolog 1.